Reading from the N-terminus, the 127-residue chain is Small ribosomal subunit protein uS13 (127 aa).

Positions 99–127 (RGQRTRTNARTRRGRRGQAIGIKKKTLKK) are disordered.

It belongs to the universal ribosomal protein uS13 family. Part of the 30S ribosomal subunit. Forms a loose heterodimer with protein S19. Forms two bridges to the 50S subunit in the 70S ribosome.

Its function is as follows. Located at the top of the head of the 30S subunit, it contacts several helices of the 16S rRNA. In the 70S ribosome it contacts the 23S rRNA (bridge B1a) and protein L5 of the 50S subunit (bridge B1b), connecting the 2 subunits; these bridges are implicated in subunit movement. Contacts the tRNAs in the A and P-sites. The protein is Small ribosomal subunit protein uS13 of Roseiflexus castenholzii (strain DSM 13941 / HLO8).